Reading from the N-terminus, the 302-residue chain is Spermidine synthase (302 aa).

Met-1 is subject to N-acetylmethionine. The PABS domain occupies 18 to 253 (EGWFRETCSL…GQIGFMLCSK (236 aa)). Gln-49 lines the S-adenosyl 3-(methylsulfanyl)propylamine pocket. Tyr-79 provides a ligand contact to putrescine. Residues Gln-80, Asp-104, Glu-124, 155 to 156 (DG), and Asp-173 contribute to the S-adenosyl 3-(methylsulfanyl)propylamine site. The Proton acceptor role is filled by Asp-173. Putrescine-binding positions include 173 to 176 (DSSD) and Tyr-241.

The protein belongs to the spermidine/spermine synthase family. In terms of assembly, homodimer or homotetramer.

The catalysed reaction is S-adenosyl 3-(methylsulfanyl)propylamine + putrescine = S-methyl-5'-thioadenosine + spermidine + H(+). It participates in amine and polyamine biosynthesis; spermidine biosynthesis; spermidine from putrescine: step 1/1. With respect to regulation, the activity is thought to be regulated mainly by the availability of decarboxylated S-adenosylmethionine. Its function is as follows. Catalyzes the production of spermidine from putrescine and decarboxylated S-adenosylmethionine (dcSAM). Has a strong preference for putrescine as substrate, and has very low activity towards 1,3-diaminopropane. Has extremely low activity towards spermidine. The sequence is that of Spermidine synthase (Srm) from Mus musculus (Mouse).